We begin with the raw amino-acid sequence, 302 residues long: Cardiolipin synthase (CMP-forming) (302 aa).

The tract at residues Pro65–Asp84 is disordered. Low complexity predominate over residues Gly71 to Asp84. 5 helical membrane passes run Ile109–Leu129, Phe133–Ile153, Ile190–Val212, Leu250–Leu270, and Gln271–Tyr289.

Belongs to the CDP-alcohol phosphatidyltransferase class-I family. A divalent metal cation serves as cofactor.

It is found in the mitochondrion inner membrane. It carries out the reaction a CDP-1,2-diacyl-sn-glycerol + a 1,2-diacyl-sn-glycero-3-phospho-(1'-sn-glycerol) = a cardiolipin + CMP + H(+). Functionally, catalyzes the synthesis of cardiolipin (CL) (diphosphatidylglycerol) by specifically transferring a phosphatidyl group from CDP-diacylglycerol to phosphatidylglycerol (PG). CL is a key phospholipid in mitochondrial membranes and plays important roles in maintaining the functional integrity and dynamics of mitochondria under both optimal and stress conditions. The polypeptide is Cardiolipin synthase (CMP-forming) (Crls1) (Rattus norvegicus (Rat)).